We begin with the raw amino-acid sequence, 237 residues long: Sugar fermentation stimulation protein homolog (237 aa).

It belongs to the SfsA family.

This chain is Sugar fermentation stimulation protein homolog, found in Pseudomonas fluorescens (strain ATCC BAA-477 / NRRL B-23932 / Pf-5).